A 122-amino-acid chain; its full sequence is Fluoride-specific ion channel FluC 2 (122 aa).

4 helical membrane-spanning segments follow: residues M1 to S21, P33 to L53, V62 to Y82, and G102 to F122. 2 residues coordinate Na(+): G72 and T75.

It belongs to the fluoride channel Fluc/FEX (TC 1.A.43) family.

It localises to the cell membrane. It carries out the reaction fluoride(in) = fluoride(out). With respect to regulation, na(+) is not transported, but it plays an essential structural role and its presence is essential for fluoride channel function. Its function is as follows. Fluoride-specific ion channel. Important for reducing fluoride concentration in the cell, thus reducing its toxicity. The polypeptide is Fluoride-specific ion channel FluC 2 (Moorella thermoacetica (strain ATCC 39073 / JCM 9320)).